The sequence spans 239 residues: Venom nerve growth factor (239 aa).

A signal peptide spans 1–18 (MSMLCYTLIIAFLIGIWA). A propeptide spanning residues 19–125 (APKSEDNVPL…ALNRNIQAKR (107 aa)) is cleaved from the precursor. Positions 47–66 (GLKTSRNTDQRHPAPKKADD) are enriched in basic and acidic residues. The interval 47–68 (GLKTSRNTDQRHPAPKKADDQE) is disordered. Disulfide bonds link cysteine 139–cysteine 203, cysteine 181–cysteine 231, and cysteine 191–cysteine 233.

Belongs to the NGF-beta family. In terms of assembly, homodimer; non-covalently linked. Expressed by the venom gland.

The protein localises to the secreted. In terms of biological role, nerve growth factor is important for the development and maintenance of the sympathetic and sensory nervous systems. It stimulates division and differentiation of sympathetic and embryonic sensory neurons as well as basal forebrain cholinergic neurons in the brain. Its relevance in the snake venom is not clear. However, it has been shown to inhibit metalloproteinase-dependent proteolysis of platelet glycoprotein Ib alpha, suggesting a metalloproteinase inhibition to prevent metalloprotease autodigestion and/or protection against prey proteases. Binds a lipid between the two protein chains in the homodimer. The lipid-bound form promotes histamine relase from mouse mast cells, contrary to the lipid-free form. This is Venom nerve growth factor from Pseudechis porphyriacus (Red-bellied black snake).